The following is a 59-amino-acid chain: Single-pass membrane and coiled-coil domain-containing protein 4 homolog (59 aa).

Basic residues predominate over residues 1 to 11; the sequence is MAGRNKAKPRL. The disordered stretch occupies residues 1 to 20; it reads MAGRNKAKPRLSKKEKEERR. A coiled-coil region spans residues 10–30; it reads RLSKKEKEERRKDMAEVQEKV. A helical transmembrane segment spans residues 30 to 50; it reads VFSVVVPVVVAFTVVIMLIVY.

This sequence belongs to the SMCO4 family.

It localises to the membrane. This chain is Single-pass membrane and coiled-coil domain-containing protein 4 homolog, found in Argas monolakensis (Mono lake bird tick).